Consider the following 246-residue polypeptide: Large ribosomal subunit protein uL30 (246 aa).

The protein belongs to the universal ribosomal protein uL30 family.

Binds to G-rich structures in 28S rRNA and in mRNAs. Plays a regulatory role in the translation apparatus; inhibits cell-free translation of mRNAs. In Dictyostelium discoideum (Social amoeba), this protein is Large ribosomal subunit protein uL30 (rpl7).